The primary structure comprises 218 residues: Dual specificity protein phosphatase TpbA (218 aa).

The signal sequence occupies residues 1–28; sequence MHRSPLAWLRLLLAAVLGAFLLGGPLHA. One can recognise a Tyrosine-protein phosphatase domain in the interval 44–188; the sequence is DPSINLYRMS…YVRGADVDGL (145 aa). Catalysis depends on Asp-105, which acts as the Proton donor/acceptor. Cys-132 functions as the Phosphocysteine intermediate in the catalytic mechanism.

This sequence belongs to the protein-tyrosine phosphatase family. As to quaternary structure, monomer in solution.

It is found in the periplasm. It carries out the reaction O-phospho-L-tyrosyl-[protein] + H2O = L-tyrosyl-[protein] + phosphate. The enzyme catalyses O-phospho-L-threonyl-[protein] + H2O = L-threonyl-[protein] + phosphate. It catalyses the reaction O-phospho-L-seryl-[protein] + H2O = L-seryl-[protein] + phosphate. Its activity is regulated as follows. The phosphatase activity is completely inhibited by trisodium orthovanadate, a tyrosine phosphatase specific inhibitor. Functionally, phosphatase that regulates diverse phenotypes in P.aeruginosa via regulation of the concentration of cellular c-di-GMP. Acts by dephosphorylating the membrane-anchored diguanylate cyclase TpbB at tyrosine and serine/threonine sites, leading to inactivation of TpbB and reduced c-di-GMP production. The reduced cellular c-di-GMP concentration leads to reduced adhesin expression, reduced extracellular polysaccharide (EPS) production, pellicule production, cell aggregation and biofilm formation, and enhanced swimming and swarming. It affects colony morphology and controls rugose colony formation. TpbA also acts as a positive regulator of extracellular DNA (eDNA, a major component of the biofilm matrix) and cell lysis by reducing c-di-GMP concentrations. In vitro shows phosphatase activity toward p-nitrophenyl phosphate (pNPP), tyrosine phosphopeptides and a threonine phosphopeptide. Does not have phosphodiesterases (PDE) activity, and cannot degrade c-di-GMP. The protein is Dual specificity protein phosphatase TpbA of Pseudomonas aeruginosa (strain UCBPP-PA14).